The sequence spans 370 residues: Polygalacturonase 1 (370 aa).

The first 18 residues, 1-18 (MRTSILSMLALGAAAVSA), serve as a signal peptide directing secretion. An intrachain disulfide couples cysteine 36 to cysteine 51. PbH1 repeat units lie at residues 163 to 194 (ADNL…DVGE), 195 to 216 (STYI…AINS), 217 to 237 (GENI…SIGS), 246 to 267 (VKNV…RIKT), and 275 to 297 (VADV…VIEQ). The active-site Proton donor is the aspartate 209. Residues cysteine 211 and cysteine 227 are joined by a disulfide bond. Residue histidine 231 is part of the active site. A glycan (N-linked (GlcNAc...) asparagine) is linked at asparagine 248. 2 disulfides stabilise this stretch: cysteine 337/cysteine 342 and cysteine 361/cysteine 370.

Belongs to the glycosyl hydrolase 28 family.

It is found in the secreted. It carries out the reaction (1,4-alpha-D-galacturonosyl)n+m + H2O = (1,4-alpha-D-galacturonosyl)n + (1,4-alpha-D-galacturonosyl)m.. This is Polygalacturonase 1 (PG1) from Penicillium olsonii.